Consider the following 512-residue polypeptide: L-aspartate oxidase (512 aa).

FAD contacts are provided by residues 17-20 and 46-53; these read SGLA and SSAWAQGG. The Proton donor/acceptor role is filled by Arg278. FAD is bound by residues Glu361 and 377–378; that span reads SL.

The protein belongs to the FAD-dependent oxidoreductase 2 family. NadB subfamily. FAD serves as cofactor.

It is found in the cytoplasm. It carries out the reaction L-aspartate + O2 = iminosuccinate + H2O2. It participates in cofactor biosynthesis; NAD(+) biosynthesis; iminoaspartate from L-aspartate (oxidase route): step 1/1. Catalyzes the oxidation of L-aspartate to iminoaspartate, the first step in the de novo biosynthesis of NAD(+). In Xylella fastidiosa (strain Temecula1 / ATCC 700964), this protein is L-aspartate oxidase (nadB).